We begin with the raw amino-acid sequence, 244 residues long: Methanethiol S-methyltransferase (244 aa).

5 helical membrane-spanning segments follow: residues 7 to 27 (IIYGAASYLVFLVAFGYAIGF), 41 to 61 (IAAPIGQAVVVNLVLLGVFAV), 90 to 110 (LLASVALLLLYWQWRTMPAVI), 120 to 140 (VALWALFWLGWATVLTSTFMI), and 181 to 201 (GFVVAFWATPMMTAGHLLFAI).

This sequence belongs to the nurim family.

It is found in the membrane. The enzyme catalyses methanethiol + S-adenosyl-L-methionine = dimethyl sulfide + S-adenosyl-L-homocysteine + H(+). Functionally, catalyzes the methylation of methanethiol (MeSH) to yield dimethylsulphide (DMS). This chain is Methanethiol S-methyltransferase, found in Mycobacterium tuberculosis (strain ATCC 25618 / H37Rv).